A 397-amino-acid chain; its full sequence is 2,6-dihydroxypyridine 3-monooxygenase (397 aa).

FAD-binding positions include 14 to 16, 35 to 36, V49, L120, D306, and 316 to 320; these read SIS, ER, and AAGGA.

In terms of assembly, homodimer. The cofactor is FAD.

The catalysed reaction is 2,6-dihydroxypyridine + NADH + O2 + H(+) = 2,3,6-trihydroxypyridine + NAD(+) + H2O. Its pathway is alkaloid degradation; nicotine degradation. In terms of biological role, catalyzes the conversion of 2,6-dihydroxypyridine into 2,3,6-trihydroxypyridine in the nicotine degradation pathway. The polypeptide is 2,6-dihydroxypyridine 3-monooxygenase (dhpH) (Paenarthrobacter nicotinovorans (Arthrobacter nicotinovorans)).